Here is a 106-residue protein sequence, read N- to C-terminus: Programmed cell death activator egl-1 (106 aa).

A BH3-like region spans residues 73–81; the sequence is LAAMCDDFD.

Interacts with ced-9; the interaction results in ced-4 release from the ced-4/ced-9 complex. Interaction with ced-9 may enhance interaction of ced-9 with drp-1, but not with ced-4. A ced-9/egl-1 complex may recruit drp-1 to the mitochondrial surface.

It localises to the synapse. Its function is as follows. Plays a major role in programmed cell death (PCD or apoptosis) by negatively regulating ced-9. Binds to and directly inhibits the activity of ced-9, releasing the cell death activator ced-4 from a ced-9/ced-4 containing protein complex and allowing ced-4 to activate the cell-killing caspase ced-3. Required to activate programmed cell death in the sister cells of the serotonergic neurosecretory motor (NSM) neurons during embryogenesis. Required to activate programmed cell death in the sister cells of the M4 motor neuron and I1 pharyngeal neuron during embryogenesis. During larval development, required for the elimination of transient presynaptic components upstream of ced-9, ced-4 and ced-3 apoptotic pathway. Together with ain-1, a component of the miRNA-induced-silencing complex (miRISC), and probably upstream of ced-3 and ced-4, regulates temporal cell fate patterning during larval development. Has been shown in two studies to be dispensable in mitochondrial dynamics and morphology during early embryonic development. However, one study shows that during larval development, egl-1 is involved in modulating mitochondrial dynamics, perhaps acting by stabilizing the interaction between ced-9 and drp-1 in order to promote mitochondrial fission. Involved in inducing mitochondrial fragmentation during apoptosis, probably acting via ced-9 and dynamin-related protein drp-1. The polypeptide is Programmed cell death activator egl-1 (Caenorhabditis elegans).